We begin with the raw amino-acid sequence, 151 residues long: Probable cGMP 3',5'-cyclic phosphodiesterase subunit delta (151 aa).

It belongs to the PDE6D/unc-119 family. In terms of assembly, interacts with Pde6.

The protein resides in the nucleus. It localises to the cytoplasm. The polypeptide is Probable cGMP 3',5'-cyclic phosphodiesterase subunit delta (Culex quinquefasciatus (Southern house mosquito)).